Reading from the N-terminus, the 594-residue chain is UvrABC system protein C (594 aa).

The 78-residue stretch at 17 to 94 folds into the GIY-YIG domain; sequence LEPGCYLMKD…IKQYQPRYNI (78 aa). The region spanning 199–234 is the UVR domain; the sequence is KTILNHLEERMNKASEQLDFEQAKEYRDMIQHIHNL.

The protein belongs to the UvrC family. Interacts with UvrB in an incision complex.

The protein localises to the cytoplasm. Functionally, the UvrABC repair system catalyzes the recognition and processing of DNA lesions. UvrC both incises the 5' and 3' sides of the lesion. The N-terminal half is responsible for the 3' incision and the C-terminal half is responsible for the 5' incision. The polypeptide is UvrABC system protein C (Staphylococcus epidermidis (strain ATCC 35984 / DSM 28319 / BCRC 17069 / CCUG 31568 / BM 3577 / RP62A)).